A 26-amino-acid polypeptide reads, in one-letter code: Acetylcholine receptor subunit delta (26 aa).

It belongs to the ligand-gated ion channel (TC 1.A.9) family. Acetylcholine receptor (TC 1.A.9.1) subfamily. Pentamer of two alpha chains, and one each of the beta, delta, and gamma chains.

The protein resides in the postsynaptic cell membrane. The protein localises to the cell membrane. It catalyses the reaction K(+)(in) = K(+)(out). The catalysed reaction is Na(+)(in) = Na(+)(out). In terms of biological role, after binding acetylcholine, the AChR responds by an extensive change in conformation that affects all subunits and leads to opening of an ion-conducting channel across the plasma membrane. The polypeptide is Acetylcholine receptor subunit delta (chrnd) (Electrophorus electricus (Electric eel)).